A 92-amino-acid polypeptide reads, in one-letter code: Small ribosomal subunit protein uS19 (92 aa).

It belongs to the universal ribosomal protein uS19 family.

Its function is as follows. Protein S19 forms a complex with S13 that binds strongly to the 16S ribosomal RNA. The polypeptide is Small ribosomal subunit protein uS19 (Borreliella afzelii (strain PKo) (Borrelia afzelii)).